Consider the following 1433-residue polypeptide: Probable ATP-dependent RNA helicase spindle-E (1433 aa).

One can recognise a Helicase ATP-binding domain in the interval 126–294; it reads INAINENPVV…FANERSAPPV (169 aa). 139-146 lines the ATP pocket; sequence GETGCGKT. A DEAH box motif is present at residues 240 to 243; sequence DEVH. Residues 355–526 enclose the Helicase C-terminal domain; it reads TGKSYNQSLR…NCVLKAKELK (172 aa). The 64-residue stretch at 935–998 folds into the Tudor domain; the sequence is AGAITKGLML…RLMSQDLLRH (64 aa).

Belongs to the DEAD box helicase family. DEAH subfamily.

It localises to the cytoplasm. The catalysed reaction is ATP + H2O = ADP + phosphate + H(+). Its function is as follows. Probable ATP-binding RNA helicase which plays a central role during spermatogenesis and oogenesis by repressing transposable elements and preventing their mobilization, which is essential for the germline integrity. Acts via the piRNA metabolic process, which mediates the repression of transposable elements during meiosis by forming complexes composed of piRNAs and Piwi and govern the methylation and subsequent repression of transposons. Involved in the repression of LTR retrotransposon copia. Also involved in telomere regulation by repressing specialized telomeric retroelements HeT-A, TAHRE, and TART; Drosophila telomeres being maintained by transposition of specialized telomeric retroelements. Involved in telomeric trans-silencing, a repression mechanism by which a transposon or a transgene inserted in subtelomeric heterochromatin has the capacity to repress in trans in the female germline, a homologous transposon, or transgene located in euchromatin. Involved in the repression of testis-expressed Stellate genes by the homologous Su(Ste) repeats. Required for anteroposterior and dorsoventral axis formation during oogenesis. The sequence is that of Probable ATP-dependent RNA helicase spindle-E (spn-E) from Drosophila pseudoobscura pseudoobscura (Fruit fly).